We begin with the raw amino-acid sequence, 110 residues long: MPAPYKKGSEKKGATLFKTRCLQCHTVEAGGPHKVGPNLHGVFGRHSGKASGYSYTDANIKKNVLWDEQTMSDYLENPKKYIPGTKMAFGGLKKEKDRNDIVTYMLKACK.

Heme c-binding residues include C21, C24, H25, and M87.

The protein belongs to the cytochrome c family. In terms of processing, binds 1 heme c group covalently per subunit.

The protein localises to the mitochondrion intermembrane space. In terms of biological role, electron carrier protein. The oxidized form of the cytochrome c heme group can accept an electron from the heme group of the cytochrome c1 subunit of cytochrome reductase. Cytochrome c then transfers this electron to the cytochrome oxidase complex, the final protein carrier in the mitochondrial electron-transport chain. The chain is Cytochrome c (CYCK) from Kluyveromyces lactis (strain ATCC 8585 / CBS 2359 / DSM 70799 / NBRC 1267 / NRRL Y-1140 / WM37) (Yeast).